A 240-amino-acid polypeptide reads, in one-letter code: Mannose-binding protein C (240 aa).

The first 18 residues, 1-18 (MSLFPSLHLLLLIVMTAS), serve as a signal peptide directing secretion. Collagen-like domains follow at residues 39–61 (SPGI…KGEP) and 67–97 (GLQG…GDSG). P46 is modified (hydroxyproline). Residues 48–102 (KDGLDGAKGEKGEPGQGLIGLQGLPGMVGPQGSPGIPGLPGLKGQKGDSGIDPGN) form a disordered region. Basic and acidic residues predominate over residues 49–60 (DGLDGAKGEKGE). A hydroxyproline mark is found at P72, P81, and P87. Residues 104-122 (LANLRSELDNIKKWLIFAQ) adopt a coiled-coil conformation. Residues 126-237 (VGKKLYLTNG…CSSQLSAVCE (112 aa)) enclose the C-type lectin domain. 2 cysteine pairs are disulfide-bonded: C147/C236 and C214/C228.

Interacts with MASP1 and MASP2. Interacts with MEP1A and MEP1B and may inhibit their catalytic activity. Forms oligomeric complexes of 2 or 3 homotrimers. Expressed in liver. Weakly expressed in kidney and testis.

Its subcellular location is the secreted. In terms of biological role, calcium-dependent lectin involved in innate immune defense. Binds mannose, fucose and N-acetylglucosamine on different microorganisms and activates the lectin complement pathway. Binds to late apoptotic cells, as well as to apoptotic blebs and to necrotic cells, but not to early apoptotic cells, facilitating their uptake by macrophages. According to some authors, it only binds mannose. The protein is Mannose-binding protein C of Sus scrofa (Pig).